Consider the following 235-residue polypeptide: Ribonuclease 3 (235 aa).

The 126-residue stretch at 6–131 folds into the RNase III domain; it reads IDQLFKLTGH…LIAVMYLDGG (126 aa). Glutamate 44 contributes to the Mg(2+) binding site. The active site involves aspartate 48. 2 residues coordinate Mg(2+): aspartate 117 and glutamate 120. Glutamate 120 is an active-site residue. The DRBM domain maps to 156–225; sequence DAKTELQEWA…AEKILRREGV (70 aa).

This sequence belongs to the ribonuclease III family. In terms of assembly, homodimer. Mg(2+) is required as a cofactor.

The protein resides in the cytoplasm. It catalyses the reaction Endonucleolytic cleavage to 5'-phosphomonoester.. Its function is as follows. Digests double-stranded RNA. Involved in the processing of primary rRNA transcript to yield the immediate precursors to the large and small rRNAs (23S and 16S). Processes some mRNAs, and tRNAs when they are encoded in the rRNA operon. Processes pre-crRNA and tracrRNA of type II CRISPR loci if present in the organism. This chain is Ribonuclease 3, found in Bartonella tribocorum (strain CIP 105476 / IBS 506).